The sequence spans 199 residues: GTP cyclohydrolase-2 (199 aa).

49 to 53 contacts GTP; the sequence is RVHSE. Zn(2+) contacts are provided by cysteine 54, cysteine 65, and cysteine 67. Residues glutamine 70, 92–94, and threonine 114 contribute to the GTP site; that span reads EGR. Aspartate 126 acts as the Proton acceptor in catalysis. The active-site Nucleophile is arginine 128. Positions 149 and 154 each coordinate GTP.

Belongs to the GTP cyclohydrolase II family. Zn(2+) serves as cofactor.

It catalyses the reaction GTP + 4 H2O = 2,5-diamino-6-hydroxy-4-(5-phosphoribosylamino)-pyrimidine + formate + 2 phosphate + 3 H(+). Its pathway is cofactor biosynthesis; riboflavin biosynthesis; 5-amino-6-(D-ribitylamino)uracil from GTP: step 1/4. In terms of biological role, catalyzes the conversion of GTP to 2,5-diamino-6-ribosylamino-4(3H)-pyrimidinone 5'-phosphate (DARP), formate and pyrophosphate. This chain is GTP cyclohydrolase-2, found in Baumannia cicadellinicola subsp. Homalodisca coagulata.